A 439-amino-acid chain; its full sequence is GTPase Der (439 aa).

EngA-type G domains are found at residues 4–168 and 177–352; these read PIVA…KDDE and INIA…DNYN. GTP-binding positions include 10-17, 57-61, 120-123, 183-190, 230-234, and 295-298; these read GRPNVGKS, DTGGI, NKID, GKPNVGKS, DTAGL, and NKWD. In terms of domain architecture, KH-like spans 353–437; the sequence is KRVKTGVLND…GIKSEFRERK (85 aa).

The protein belongs to the TRAFAC class TrmE-Era-EngA-EngB-Septin-like GTPase superfamily. EngA (Der) GTPase family. As to quaternary structure, associates with the 50S ribosomal subunit.

GTPase that plays an essential role in the late steps of ribosome biogenesis. This Clostridium botulinum (strain ATCC 19397 / Type A) protein is GTPase Der.